The following is a 444-amino-acid chain: Putative methylesterase 13, chloroplastic (444 aa).

Disordered stretches follow at residues 1-32 (MGNS…KYKY), 49-90 (PSLS…KDSH), and 124-176 (SVVY…QLVD). Residues 1-60 (MGNSFTCISHEQEQRPKKSSGGGGNNSGKYKYVRRLSLMPSFRRRTLLPSLSCSGSSSTS) constitute a chloroplast transit peptide. The span at 49–64 (PSLSCSGSSSTSSSKK) shows a compositional bias: low complexity. Residues 65–82 (GGIKAKTKKIRERHHHHH) are compositionally biased toward basic residues. Positions 124-148 (SVVYPSAQPSGTSSGPVSAVQTPKK) are enriched in polar residues. The segment covering 149–164 (SSAGFVRSSSSRQRSS) has biased composition (low complexity). The 121-residue stretch at 190-310 (FVLVHGGGFG…LFNQQLGSND (121 aa)) folds into the AB hydrolase-1 domain. The Acyl-ester intermediate role is filled by D264. Catalysis depends on charge relay system residues D390 and H418.

It belongs to the AB hydrolase superfamily. Methylesterase family.

The protein localises to the plastid. It localises to the chloroplast. Putative methylesterase. This Arabidopsis thaliana (Mouse-ear cress) protein is Putative methylesterase 13, chloroplastic.